A 270-amino-acid polypeptide reads, in one-letter code: MKMTSKKMKDELMKKLSRPEWDCHYDSEKEVLRIEQTDSKKGINVSLPGVVAKWEVNKEKAIEEVAYYVQEALIAMHKEENSMAKILPVIRSTSFPKQSEEGNPFIMTDHTAETRIYYALDSNKTYRLIDERLLQKLELTEEQVREMALFNARSLGYEFKQETVAGNTFYFLNTNDGYDASRILNESLLHSMREKISGDMVVAVPHQDVLIIADIVNEIGYDIIAQMTMKFFAEGHVPITSLSFVYEDGDFEPIFILAKNRKKTDGKEKG.

It belongs to the UPF0354 family.

The sequence is that of UPF0354 protein BcerKBAB4_4524 from Bacillus mycoides (strain KBAB4) (Bacillus weihenstephanensis).